Consider the following 186-residue polypeptide: ATP synthase subunit delta (186 aa).

It belongs to the ATPase delta chain family. In terms of assembly, F-type ATPases have 2 components, F(1) - the catalytic core - and F(0) - the membrane proton channel. F(1) has five subunits: alpha(3), beta(3), gamma(1), delta(1), epsilon(1). F(0) has three main subunits: a(1), b(2) and c(10-14). The alpha and beta chains form an alternating ring which encloses part of the gamma chain. F(1) is attached to F(0) by a central stalk formed by the gamma and epsilon chains, while a peripheral stalk is formed by the delta and b chains.

It localises to the cell inner membrane. Its function is as follows. F(1)F(0) ATP synthase produces ATP from ADP in the presence of a proton or sodium gradient. F-type ATPases consist of two structural domains, F(1) containing the extramembraneous catalytic core and F(0) containing the membrane proton channel, linked together by a central stalk and a peripheral stalk. During catalysis, ATP synthesis in the catalytic domain of F(1) is coupled via a rotary mechanism of the central stalk subunits to proton translocation. This protein is part of the stalk that links CF(0) to CF(1). It either transmits conformational changes from CF(0) to CF(1) or is implicated in proton conduction. The polypeptide is ATP synthase subunit delta (Leptospira borgpetersenii serovar Hardjo-bovis (strain JB197)).